The following is a 60-amino-acid chain: Large ribosomal subunit protein uL30 (60 aa).

The protein belongs to the universal ribosomal protein uL30 family. In terms of assembly, part of the 50S ribosomal subunit.

The chain is Large ribosomal subunit protein uL30 from Saccharopolyspora erythraea (strain ATCC 11635 / DSM 40517 / JCM 4748 / NBRC 13426 / NCIMB 8594 / NRRL 2338).